Here is a 261-residue protein sequence, read N- to C-terminus: tRNA pseudouridine synthase A (261 aa).

Asp51 acts as the Nucleophile in catalysis. Position 109 (Tyr109) interacts with substrate.

Belongs to the tRNA pseudouridine synthase TruA family. In terms of assembly, homodimer.

The catalysed reaction is uridine(38/39/40) in tRNA = pseudouridine(38/39/40) in tRNA. Formation of pseudouridine at positions 38, 39 and 40 in the anticodon stem and loop of transfer RNAs. In Shewanella sp. (strain MR-4), this protein is tRNA pseudouridine synthase A.